The following is a 384-amino-acid chain: Guanine nucleotide-binding protein alpha-1 subunit (384 aa).

The disordered stretch occupies residues 1–22; that stretch reads MGSLCSRNKHYSQADDEENTQT. Gly-2 carries the N-myristoyl glycine lipid modification. Cys-5 is lipidated: S-palmitoyl cysteine. A G-alpha domain is found at 38 to 384; the sequence is HIQKLLLLGA…RRNLFEAGLL (347 aa). The tract at residues 41–54 is G1 motif; it reads KLLLLGAGDSGKST. The GTP site is built by Asp-49, Ser-50, Gly-51, Lys-52, Ser-53, Thr-54, Asp-163, Leu-188, Thr-194, Gly-222, Asn-288, Lys-289, Asp-291, and Ala-356. Ser-53 is a Mg(2+) binding site. The interval 186–194 is G2 motif; it reads DVLFARIRT. Thr-194 provides a ligand contact to Mg(2+). Positions 215–224 are G3 motif; it reads YRLFDVGGQR. Residues 284–291 are G4 motif; it reads MLFLNKFD. The segment at 354 to 359 is G5 motif; it reads TTALDQ.

It belongs to the G-alpha family. G proteins are composed of 3 units; alpha, beta and gamma. The alpha chain contains the guanine nucleotide binding site. Mg(2+) serves as cofactor.

Guanine nucleotide-binding proteins (G proteins) are involved as modulators or transducers in various transmembrane signaling systems. This is Guanine nucleotide-binding protein alpha-1 subunit (GPA1) from Solanum lycopersicum (Tomato).